A 728-amino-acid chain; its full sequence is Catalase-peroxidase (728 aa).

Positions 91 to 218 form a cross-link, tryptophyl-tyrosyl-methioninium (Trp-Tyr) (with M-244); that stretch reads WHSAGTYRIA…LAAVQMGLIY (128 aa). Residue histidine 92 is the Proton acceptor of the active site. The segment at residues 218–244 is a cross-link (tryptophyl-tyrosyl-methioninium (Tyr-Met) (with W-91)); sequence YVNPEGPDGNPDPVAAARDIRETFARM. Histidine 259 serves as a coordination point for heme b.

The protein belongs to the peroxidase family. Peroxidase/catalase subfamily. In terms of assembly, homodimer or homotetramer. It depends on heme b as a cofactor. In terms of processing, formation of the three residue Trp-Tyr-Met cross-link is important for the catalase, but not the peroxidase activity of the enzyme.

It catalyses the reaction H2O2 + AH2 = A + 2 H2O. The enzyme catalyses 2 H2O2 = O2 + 2 H2O. Functionally, bifunctional enzyme with both catalase and broad-spectrum peroxidase activity. The protein is Catalase-peroxidase of Burkholderia multivorans (strain ATCC 17616 / 249).